Reading from the N-terminus, the 78-residue chain is MSRVCQVTSKRPAVGNNRSHALNATRRRFLPNLHTHRFWVESENRFVTLRLTAKGMRIIDKKGIDAVLAEIRARGEKI.

The tract at residues 1–20 (MSRVCQVTSKRPAVGNNRSH) is disordered.

This sequence belongs to the bacterial ribosomal protein bL28 family.

The chain is Large ribosomal subunit protein bL28 from Haemophilus ducreyi (strain 35000HP / ATCC 700724).